The sequence spans 49 residues: Putative DNA-directed RNA polymerase subunit omega (49 aa).

The protein belongs to the RNA polymerase subunit omega family.

It is found in the plastid. The protein resides in the chloroplast. The enzyme catalyses RNA(n) + a ribonucleoside 5'-triphosphate = RNA(n+1) + diphosphate. May be involved in RNA polymerase activity. The chain is Putative DNA-directed RNA polymerase subunit omega (rpoZ) from Cyanidioschyzon merolae (strain NIES-3377 / 10D) (Unicellular red alga).